The sequence spans 345 residues: Dihydroorotase (345 aa).

Zn(2+)-binding residues include H13 and H15. Residues 15–17 and N41 contribute to the substrate site; that span reads HLR. Residues K100, H137, and H175 each coordinate Zn(2+). K100 is modified (N6-carboxylysine). Position 137 (H137) interacts with substrate. L220 contacts substrate. D248 is a binding site for Zn(2+). The active site involves D248. Residues H252 and A264 each coordinate substrate.

The protein belongs to the metallo-dependent hydrolases superfamily. DHOase family. Class II DHOase subfamily. Homodimer. Requires Zn(2+) as cofactor.

The catalysed reaction is (S)-dihydroorotate + H2O = N-carbamoyl-L-aspartate + H(+). It participates in pyrimidine metabolism; UMP biosynthesis via de novo pathway; (S)-dihydroorotate from bicarbonate: step 3/3. Its function is as follows. Catalyzes the reversible cyclization of carbamoyl aspartate to dihydroorotate. The protein is Dihydroorotase of Laribacter hongkongensis (strain HLHK9).